Here is a 338-residue protein sequence, read N- to C-terminus: STEAP1 protein (338 aa).

2 helical membrane-spanning segments follow: residues 70 to 90 (WHLP…YTLL) and 118 to 138 (PMVS…AAIV). The region spanning 117–264 (LPMVSITLLA…TLGIVSLLLG (148 aa)) is the Ferric oxidoreductase domain. 2 residues coordinate FAD: glutamine 139 and arginine 160. Transmembrane regions (helical) follow at residues 163 to 183 (FGLL…SYPM), 217 to 237 (IYVS…VTSI), 252 to 272 (IQST…LIFA), and 290 to 310 (FMIA…LLLP). Histidine 174 provides a ligand contact to heme b. Residues serine 236 and glutamine 253 each contribute to the FAD site. Histidine 267 contacts heme b.

This sequence belongs to the STEAP family. Homotrimer. Requires FAD as cofactor. The cofactor is heme b.

Its subcellular location is the endosome membrane. It is found in the cell membrane. Does not function as a metalloreductase due to the absence of binding sites for the electron-donating substrate NADPH. The sequence is that of STEAP1 protein (STEAP1) from Sus scrofa (Pig).